We begin with the raw amino-acid sequence, 407 residues long: Serine/threonine-protein kinase GRIK2 (407 aa).

Residues 21–64 (SGSRNQQSPKPYDDDTHSCDSDVTSTARGEEEEDEEEVEQKSRS) form a disordered region. The span at 31–40 (PYDDDTHSCD) shows a compositional bias: basic and acidic residues. One can recognise a Protein kinase domain in the interval 107-370 (YVRVCKIGSG…LKNVSEHPWV (264 aa)). ATP-binding positions include 113 to 121 (IGSGSYGKV) and Lys-136. Position 153 is a phosphothreonine; by autocatalysis (Thr-153). Residue Asp-238 is the Proton acceptor of the active site. Ser-260 is modified (phosphoserine; by KIN10).

It belongs to the protein kinase superfamily. Ser/Thr protein kinase family. In terms of assembly, associates with the SNF1-related protein kinase (SnRK) complex. Interacts with AL1, a geminivirus (TGMV) protein essential for viral replication. As to expression, expressed in shoot apical meristem, leaf primordium and emerging petiole (at protein level).

It catalyses the reaction L-seryl-[protein] + ATP = O-phospho-L-seryl-[protein] + ADP + H(+). The catalysed reaction is L-threonyl-[protein] + ATP = O-phospho-L-threonyl-[protein] + ADP + H(+). With respect to regulation, activated when autophosphorylated at Thr-153 and inactivated when phosphorylated at Ser-260 by SnRK1.1/KIN10. In terms of biological role, activates SnRK1.1/KIN10 and SnRK1.2/KIN11 by phosphorylation of their activation-loop 'Thr-198' and 'Thr-176', respectively. Required for the regulation by SnRK1 kinases of the transcription of a large set of genes, the modification the activity of metabolic enzymes, and the control of various nutrient-responsive cellular developmental processes. The protein is Serine/threonine-protein kinase GRIK2 (GRIK2) of Arabidopsis thaliana (Mouse-ear cress).